Consider the following 176-residue polypeptide: Siroheme decarboxylase alpha subunit (176 aa).

The tract at residues Met-1 to Ala-24 is disordered. Residues Ser-12 to Ala-24 show a composition bias toward low complexity.

Belongs to the Ahb/Nir family. As to quaternary structure, forms a heterodimer composed of AhbA and AhbB. Also forms heterotetramers.

It carries out the reaction siroheme + 2 H(+) = 12,18-didecarboxysiroheme + 2 CO2. Its pathway is porphyrin-containing compound metabolism; protoheme biosynthesis. Functionally, involved in siroheme-dependent heme b biosynthesis. Catalyzes the decarboxylation of siroheme into didecarboxysiroheme. This chain is Siroheme decarboxylase alpha subunit, found in Nitratidesulfovibrio vulgaris (strain ATCC 29579 / DSM 644 / CCUG 34227 / NCIMB 8303 / VKM B-1760 / Hildenborough) (Desulfovibrio vulgaris).